The primary structure comprises 242 residues: Probable transcriptional regulatory protein XCC3027 (242 aa).

Belongs to the TACO1 family.

It localises to the cytoplasm. The protein is Probable transcriptional regulatory protein XCC3027 of Xanthomonas campestris pv. campestris (strain ATCC 33913 / DSM 3586 / NCPPB 528 / LMG 568 / P 25).